The primary structure comprises 237 residues: tRNA (guanine-N(7)-)-methyltransferase (237 aa).

S-adenosyl-L-methionine is bound by residues Glu-68, Glu-93, Asp-120, and Asp-143. The active site involves Asp-143. Residues Lys-147, Asp-179, and 216–219 contribute to the substrate site; that span reads TKFE.

It belongs to the class I-like SAM-binding methyltransferase superfamily. TrmB family.

The enzyme catalyses guanosine(46) in tRNA + S-adenosyl-L-methionine = N(7)-methylguanosine(46) in tRNA + S-adenosyl-L-homocysteine. The protein operates within tRNA modification; N(7)-methylguanine-tRNA biosynthesis. Functionally, catalyzes the formation of N(7)-methylguanine at position 46 (m7G46) in tRNA. In Shewanella halifaxensis (strain HAW-EB4), this protein is tRNA (guanine-N(7)-)-methyltransferase.